A 183-amino-acid chain; its full sequence is ATP synthase subunit delta (183 aa).

The protein belongs to the ATPase delta chain family. F-type ATPases have 2 components, F(1) - the catalytic core - and F(0) - the membrane proton channel. F(1) has five subunits: alpha(3), beta(3), gamma(1), delta(1), epsilon(1). F(0) has three main subunits: a(1), b(2) and c(10-14). The alpha and beta chains form an alternating ring which encloses part of the gamma chain. F(1) is attached to F(0) by a central stalk formed by the gamma and epsilon chains, while a peripheral stalk is formed by the delta and b chains.

The protein resides in the cell inner membrane. Functionally, f(1)F(0) ATP synthase produces ATP from ADP in the presence of a proton or sodium gradient. F-type ATPases consist of two structural domains, F(1) containing the extramembraneous catalytic core and F(0) containing the membrane proton channel, linked together by a central stalk and a peripheral stalk. During catalysis, ATP synthesis in the catalytic domain of F(1) is coupled via a rotary mechanism of the central stalk subunits to proton translocation. This protein is part of the stalk that links CF(0) to CF(1). It either transmits conformational changes from CF(0) to CF(1) or is implicated in proton conduction. The polypeptide is ATP synthase subunit delta (Thermotoga maritima (strain ATCC 43589 / DSM 3109 / JCM 10099 / NBRC 100826 / MSB8)).